The primary structure comprises 650 residues: Primary amine oxidase 1 (650 aa).

A signal peptide spans M1–G19. N-linked (GlcNAc...) asparagine glycans are attached at residues N2, N34, N62, and N149. C155 and C176 are disulfide-bonded. N-linked (GlcNAc...) asparagine glycosylation occurs at N235. F308 to S319 lines the substrate pocket. D310 serves as the catalytic Proton acceptor. The cysteines at positions 329 and 355 are disulfide-linked. L395–Y400 lines the substrate pocket. The active-site Schiff-base intermediate with substrate; via topaquinone is Y398. Y398 is modified (2',4',5'-topaquinone). 2 residues coordinate Cu cation: H453 and H455. Mn(2+)-binding residues include D462 and D464. N486 carries N-linked (GlcNAc...) asparagine glycosylation. Mn(2+)-binding residues include D607 and I608. Position 618 (H618) interacts with Cu cation.

Belongs to the copper/topaquinone oxidase family. Homodimer. It depends on L-topaquinone as a cofactor. Requires Cu cation as cofactor. Zn(2+) is required as a cofactor. Mn(2+) serves as cofactor. In terms of processing, topaquinone (TPQ) is generated by copper-dependent autoxidation of a specific tyrosyl residue. As to expression, expressed in the vascular tissues at the division/differentiation transition zone.

Its subcellular location is the secreted. The catalysed reaction is a primary methyl amine + O2 + H2O = an aldehyde + H2O2 + NH4(+). Repressed by semi-carbazide, a specific and irreversible inhibitor of copper amine oxidases. In terms of biological role, oxidizes preferentially the aliphatic diamine putrescine with production of the corresponding aldehyde, ammonia and hydrogen peroxide. May be involved in the regulation of developmental programmed cell death (PCD) in both vascular tissue and the root cap. Required for jasmonic acid-(MeJA) mediated early protoxylem differentiation associated with putrescine levels reduction and H(2)O(2) accumulation in roots. In Arabidopsis thaliana (Mouse-ear cress), this protein is Primary amine oxidase 1.